Here is a 573-residue protein sequence, read N- to C-terminus: Acetolactate synthase large subunit (573 aa).

Glu51 is a binding site for thiamine diphosphate. FAD is bound by residues Arg153, 261–282, and 304–323; these read HGTLEANTAMHESDLILGIGVR and DIDPTSISKNVPVAIPIVGN. Residues 396 to 476 form a thiamine pyrophosphate binding region; it reads QHQMFAALHY…VVIICLNNHF (81 aa). 2 residues coordinate Mg(2+): Asp447 and Asn474.

This sequence belongs to the TPP enzyme family. Dimer of large and small chains. The cofactor is Mg(2+). Thiamine diphosphate is required as a cofactor.

It carries out the reaction 2 pyruvate + H(+) = (2S)-2-acetolactate + CO2. The protein operates within amino-acid biosynthesis; L-isoleucine biosynthesis; L-isoleucine from 2-oxobutanoate: step 1/4. It functions in the pathway amino-acid biosynthesis; L-valine biosynthesis; L-valine from pyruvate: step 1/4. The sequence is that of Acetolactate synthase large subunit (ilvI) from Haemophilus influenzae (strain ATCC 51907 / DSM 11121 / KW20 / Rd).